We begin with the raw amino-acid sequence, 209 residues long: Large ribosomal subunit protein uL3 (209 aa).

A disordered region spans residues 122–151 (AIKRHGQSRGPMSHGSRYHRRPGSMGPVDP).

Belongs to the universal ribosomal protein uL3 family. In terms of assembly, part of the 50S ribosomal subunit. Forms a cluster with proteins L14 and L19.

Functionally, one of the primary rRNA binding proteins, it binds directly near the 3'-end of the 23S rRNA, where it nucleates assembly of the 50S subunit. This Bacillus velezensis (strain DSM 23117 / BGSC 10A6 / LMG 26770 / FZB42) (Bacillus amyloliquefaciens subsp. plantarum) protein is Large ribosomal subunit protein uL3.